A 291-amino-acid chain; its full sequence is Pentonolactonase XacC (291 aa).

Residues E15, N141, and D191 each contribute to the a divalent metal cation site. The Proton donor/acceptor role is filled by D191.

Belongs to the SMP-30/CGR1 family. In terms of assembly, monomer. Requires a divalent metal cation as cofactor.

The catalysed reaction is L-arabinono-1,4-lactone + H2O = L-arabinonate + H(+). It carries out the reaction D-xylono-1,4-lactone + H2O = D-xylonate + H(+). The protein operates within carbohydrate degradation. Pentonolactonase involved in D-arabinose and D-xylose catabolism. Catalyzes the hydrolysis of both L-arabino-gamma-lactone and D-xylono-gamma-lactone to the corresponding acids. Can also hydrolyze D-galactono-gamma-lactone and D-glucono-delta-lactone. The sequence is that of Pentonolactonase XacC from Haloferax volcanii (strain ATCC 29605 / DSM 3757 / JCM 8879 / NBRC 14742 / NCIMB 2012 / VKM B-1768 / DS2) (Halobacterium volcanii).